The following is a 355-amino-acid chain: Peptide chain release factor 1 (355 aa).

An N5-methylglutamine modification is found at Gln-231. Basic and acidic residues predominate over residues Ser-280 to Lys-291. A disordered region spans residues Ser-280 to Ile-303.

The protein belongs to the prokaryotic/mitochondrial release factor family. Methylated by PrmC. Methylation increases the termination efficiency of RF1.

It localises to the cytoplasm. Its function is as follows. Peptide chain release factor 1 directs the termination of translation in response to the peptide chain termination codons UAG and UAA. The sequence is that of Peptide chain release factor 1 from Campylobacter jejuni (strain RM1221).